Here is a 411-residue protein sequence, read N- to C-terminus: MKMVLSQRQREELNQAIADYLGSNGYADSLETFRKEADLSTEVEKKFGGLLEKKWTSVIRLQKKVMELEAKLTEAEKEVIEGAPTKNKRTPGEWIPRPPEKFSLTGHRASITRVIFHPIFALMVSASEDATIRIWDFETGEYERSLKGHTDSVQDVAFDAQGKLLASCSADLSIKLWDFQQSYECIKTMHGHDHNVSSVAFVPAGDYVLSASRDRTIKMWEVATGYCVKTYTGHREWVRMVRVHIEGSIFATCSNDQTIRVWLTNSKDCKVELRDHEHTVECIAWAPEAAASAINEAAGADNKKGHHQGPFLASGSRDKTIRIWDVSVGLCLLTLSGHDNWVRGLAFHPGGKYLVSASDDKTIRVWDLRNKRCMKTLYAHQHFCTSIDFHKAHPYVISGSVDQTVKVWECR.

Residues 9-41 (QREELNQAIADYLGSNGYADSLETFRKEADLST) enclose the LisH domain. Residues 56 to 83 (TSVIRLQKKVMELEAKLTEAEKEVIEGA) adopt a coiled-coil conformation. WD repeat units follow at residues 106 to 147 (GHRA…RSLK), 148 to 187 (GHTDSVQDVAFDAQGKLLASCSADLSIKLWDFQQSYECIK), 191 to 230 (GHDHNVSSVAFVPAGDYVLSASRDRTIKMWEVATGYCVKT), 233 to 272 (GHREWVRMVRVHIEGSIFATCSNDQTIRVWLTNSKDCKVE), 275 to 334 (DHEH…CLLT), 337 to 376 (GHDNWVRGLAFHPGGKYLVSASDDKTIRVWDLRNKRCMKT), and 379 to 411 (AHQHFCTSIDFHKAHPYVISGSVDQTVKVWECR).

The protein belongs to the WD repeat LIS1/nudF family.

The protein resides in the cytoplasm. It is found in the cytoskeleton. Its subcellular location is the microtubule organizing center. It localises to the centrosome. In terms of biological role, positively regulates the activity of the minus-end directed microtubule motor protein dynein. May enhance dynein-mediated microtubule sliding by targeting dynein to the microtubule plus end. Required for several dynein- and microtubule-dependent processes. This chain is Lissencephaly-1 homolog, found in Drosophila sechellia (Fruit fly).